Consider the following 193-residue polypeptide: AP-3 complex subunit sigma-2 (193 aa).

The protein belongs to the adaptor complexes small subunit family. In terms of assembly, adaptor protein complex 3 (AP-3) is a heterotetramer composed of two large adaptins (delta-type subunit AP3D1 and beta-type subunit AP3B1 or AP3B2), a medium adaptin (mu-type subunit AP3M1 or AP3M2) and a small adaptin (sigma-type subunit APS1 or AP3S2). Interacts with AGAP1. AP-3 associates with the BLOC-1 complex. Present in all adult tissues examined.

It is found in the golgi apparatus. Its subcellular location is the cytoplasmic vesicle membrane. In terms of biological role, part of the AP-3 complex, an adaptor-related complex which is not clathrin-associated. The complex is associated with the Golgi region as well as more peripheral structures. It facilitates the budding of vesicles from the Golgi membrane and may be directly involved in trafficking to lysosomes. In concert with the BLOC-1 complex, AP-3 is required to target cargos into vesicles assembled at cell bodies for delivery into neurites and nerve terminals. The chain is AP-3 complex subunit sigma-2 (AP3S2) from Homo sapiens (Human).